Reading from the N-terminus, the 461-residue chain is RCC1-like G exchanging factor-like protein (461 aa).

Low complexity predominate over residues 1–10 (MLAAARALRG). A mitochondrion-targeting transit peptide spans 1-34 (MLAAARALRGPRPRWPTPAREHWTPAGRSRSRRE). The tract at residues 1–35 (MLAAARALRGPRPRWPTPAREHWTPAGRSRSRREA) is disordered. RCC1 repeat units follow at residues 55-121 (ADRV…LSSK), 125-188 (VTKV…VLTD), 190-244 (EGVF…FLTD), 245-297 (KGEV…ALSA), 298-350 (DGGV…VLNA), 352-408 (GHVF…ALTN), and 409-458 (KGEL…TLAK).

In terms of assembly, forms a regulatory protein-RNA complex, consisting of RCC1L, NGRN, RPUSD3, RPUSD4, TRUB2, FASTKD2 and 16S mt-rRNA. Interacts with 16S mt-rRNA; this interaction is direct. Interacts with OPA1; this interaction is direct. At E8.5, broadly expressed in yolk sac placenta, decidua, and embryo, with highest levels found in the trophoblast giant cells (TGCs) and ectoplacental cone (at protein level).

The protein localises to the mitochondrion inner membrane. In terms of biological role, guanine nucleotide exchange factor (GEF) for mitochondrial dynamin-related GTPase OPA1. Activates OPA1, by exchanging bound GDP for free GTP, and drives OPA1 and MFN1-dependent mitochondrial fusion. Plays an essential role in mitochondrial ribosome biogenesis. As a component of a functional protein-RNA module, consisting of RCC1L, NGRN, RPUSD3, RPUSD4, TRUB2, FASTKD2 and 16S mitochondrial ribosomal RNA (16S mt-rRNA), controls 16S mt-rRNA abundance and is required for intra-mitochondrial translation of core subunits of the oxidative phosphorylation system. This chain is RCC1-like G exchanging factor-like protein, found in Mus musculus (Mouse).